We begin with the raw amino-acid sequence, 87 residues long: Cell division topological specificity factor (87 aa).

The protein belongs to the MinE family.

Prevents the cell division inhibition by proteins MinC and MinD at internal division sites while permitting inhibition at polar sites. This ensures cell division at the proper site by restricting the formation of a division septum at the midpoint of the long axis of the cell. The sequence is that of Cell division topological specificity factor from Delftia acidovorans (strain DSM 14801 / SPH-1).